Here is a 521-residue protein sequence, read N- to C-terminus: Probable ATP-dependent RNA helicase Dbp45A (521 aa).

Residues 7 to 35 (NPFQILGLRPWLVKQLTKLGLKGATPIQQ) carry the Q motif motif. One can recognise a Helicase ATP-binding domain in the interval 38 to 209 (IPAILAGQDC…IFPIASDCFE (172 aa)). 51–58 (AKTGSGKT) is an ATP binding site. The DEAD box signature appears at 157-160 (DEAD). The Helicase C-terminal domain occupies 237–386 (VLIEALRKYR…EHPIDQRMVE (150 aa)). The tract at residues 448–521 (KRKLQHAEPA…GRADVKKDKA (74 aa)) is disordered. Composition is skewed to basic and acidic residues over residues 460–482 (EEGK…FEKK) and 502–521 (LNKE…KDKA).

It belongs to the DEAD box helicase family. DDX49/DBP8 subfamily.

The enzyme catalyses ATP + H2O = ADP + phosphate + H(+). Functionally, probable ATP-binding RNA helicase. This Drosophila melanogaster (Fruit fly) protein is Probable ATP-dependent RNA helicase Dbp45A (Dbp45A).